A 574-amino-acid polypeptide reads, in one-letter code: Probable cytochrome c oxidase subunit 1 (574 aa).

The helical transmembrane segment at 40–60 (IGIMYCVACFIFFFVGGLLAL) threads the bilayer. H86 contacts Fe(II)-heme a. The next 6 helical transmembrane spans lie at 89 to 109 (IMLL…VLPL), 121 to 141 (LNAF…AGFI), 170 to 190 (LWIM…VNMI), 213 to 233 (ILVT…ALFG), 258 to 278 (LFWF…FGIV), and 290 to 310 (IFGY…SVAV). Positions 264 and 268 each coordinate Cu cation. The 1'-histidyl-3'-tyrosine (His-Tyr) cross-link spans 264–268 (HPEVY). Positions 313 and 314 each coordinate Cu cation. 2 consecutive transmembrane segments (helical) span residues 315–335 (MFAT…LIAV) and 359–379 (MLFS…GVLL). Heme a3 is bound at residue H397. 3 consecutive transmembrane segments (helical) span residues 398–418 (FHYV…YFWF), 433–453 (LHFW…HWLG), and 476–496 (VSTI…WNVF). H399 provides a ligand contact to Fe(II)-heme a.

The protein belongs to the heme-copper respiratory oxidase family. In terms of assembly, associates with subunits II, III and IV to form cytochrome c oxidase. The cofactor is Cu(2+). Heme serves as cofactor.

The protein resides in the cell membrane. It catalyses the reaction 4 Fe(II)-[cytochrome c] + O2 + 8 H(+)(in) = 4 Fe(III)-[cytochrome c] + 2 H2O + 4 H(+)(out). It participates in energy metabolism; oxidative phosphorylation. Functionally, cytochrome c oxidase is the component of the respiratory chain that catalyzes the reduction of oxygen to water. Subunits 1-3 form the functional core of the enzyme complex. CO I is the catalytic subunit of the enzyme. Electrons originating in cytochrome c are transferred via the copper A center of subunit 2 and heme A of subunit 1 to the bimetallic center formed by heme A3 and copper B. The sequence is that of Probable cytochrome c oxidase subunit 1 (ctaD) from Mycobacterium leprae (strain TN).